Reading from the N-terminus, the 403-residue chain is Endophilin-B2 (403 aa).

Positions 1 to 27 (MDFNVKKLASDAGVFFSRAMQFTEEKL) are membrane-binding amphipathic helix. A BAR domain is found at 24-287 (EEKLGQAEKT…LGRFSGTFVG (264 aa)). A coiled-coil region spans residues 210-233 (WSDEVEKAEHELRLTQTEFDRQAE). The SH3 domain maps to 343–403 (SGTRKARVLY…VPVTYLELLS (61 aa)).

Belongs to the endophilin family. In terms of assembly, homodimer, and heterodimer with SH3GLB1.

Its subcellular location is the cytoplasm. In Gallus gallus (Chicken), this protein is Endophilin-B2.